A 290-amino-acid polypeptide reads, in one-letter code: ATP synthase gamma chain (290 aa).

Belongs to the ATPase gamma chain family. F-type ATPases have 2 components, CF(1) - the catalytic core - and CF(0) - the membrane proton channel. CF(1) has five subunits: alpha(3), beta(3), gamma(1), delta(1), epsilon(1). CF(0) has three main subunits: a, b and c.

Its subcellular location is the cell membrane. Its function is as follows. Produces ATP from ADP in the presence of a proton gradient across the membrane. The gamma chain is believed to be important in regulating ATPase activity and the flow of protons through the CF(0) complex. The sequence is that of ATP synthase gamma chain from Akkermansia muciniphila (strain ATCC BAA-835 / DSM 22959 / JCM 33894 / BCRC 81048 / CCUG 64013 / CIP 107961 / Muc).